We begin with the raw amino-acid sequence, 271 residues long: Bifunctional protein FolD (271 aa).

Residues 154–156 (GRS), Thr-181, and Ile-222 contribute to the NADP(+) site.

The protein belongs to the tetrahydrofolate dehydrogenase/cyclohydrolase family. As to quaternary structure, homodimer.

It catalyses the reaction (6R)-5,10-methylene-5,6,7,8-tetrahydrofolate + NADP(+) = (6R)-5,10-methenyltetrahydrofolate + NADPH. It carries out the reaction (6R)-5,10-methenyltetrahydrofolate + H2O = (6R)-10-formyltetrahydrofolate + H(+). Its pathway is one-carbon metabolism; tetrahydrofolate interconversion. In terms of biological role, catalyzes the oxidation of 5,10-methylenetetrahydrofolate to 5,10-methenyltetrahydrofolate and then the hydrolysis of 5,10-methenyltetrahydrofolate to 10-formyltetrahydrofolate. In Thermosipho africanus (strain TCF52B), this protein is Bifunctional protein FolD.